A 435-amino-acid chain; its full sequence is F-box/FBD/LRR-repeat protein At5g44980 (435 aa).

The region spanning 3-49 is the F-box domain; that stretch reads RDYISELPDSLLTQILLELRTKDSVKTSVLSKRWRNLWLNVPGLELF. 6 LRR repeats span residues 88-114, 138-162, 165-190, 191-217, 250-275, and 324-349; these read CKGY…YVFM, LHNV…KLEN, HGED…ELIR, PFDI…TLHF, VKNL…DLRM, and MWSS…ILEY. One can recognise an FBD domain in the interval 355–405; the sequence is REQVDFTNVPQCLISTLEYVEIKEPNEKSTIKLVNYFLENSAVLKKLTLRF.

In Arabidopsis thaliana (Mouse-ear cress), this protein is F-box/FBD/LRR-repeat protein At5g44980.